The sequence spans 343 residues: Biotin synthase (343 aa).

Residues 36-254 (NTIQISTLLS…IAVARIMMPK (219 aa)) form the Radical SAM core domain. The [4Fe-4S] cluster site is built by cysteine 51, cysteine 55, and cysteine 58. Residues cysteine 95, cysteine 126, cysteine 186, and arginine 258 each coordinate [2Fe-2S] cluster.

This sequence belongs to the radical SAM superfamily. Biotin synthase family. In terms of assembly, homodimer. Requires [4Fe-4S] cluster as cofactor. The cofactor is [2Fe-2S] cluster.

It catalyses the reaction (4R,5S)-dethiobiotin + (sulfur carrier)-SH + 2 reduced [2Fe-2S]-[ferredoxin] + 2 S-adenosyl-L-methionine = (sulfur carrier)-H + biotin + 2 5'-deoxyadenosine + 2 L-methionine + 2 oxidized [2Fe-2S]-[ferredoxin]. The protein operates within cofactor biosynthesis; biotin biosynthesis; biotin from 7,8-diaminononanoate: step 2/2. In terms of biological role, catalyzes the conversion of dethiobiotin (DTB) to biotin by the insertion of a sulfur atom into dethiobiotin via a radical-based mechanism. The chain is Biotin synthase from Buchnera aphidicola subsp. Acyrthosiphon pisum (strain APS) (Acyrthosiphon pisum symbiotic bacterium).